Reading from the N-terminus, the 265-residue chain is 3-methyl-2-oxobutanoate hydroxymethyltransferase (265 aa).

Aspartate 46 and aspartate 85 together coordinate Mg(2+). 3-methyl-2-oxobutanoate is bound by residues 46–47, aspartate 85, and lysine 114; that span reads DS. Glutamate 116 contributes to the Mg(2+) binding site. The active-site Proton acceptor is the glutamate 183.

It belongs to the PanB family. As to quaternary structure, homodecamer; pentamer of dimers. Requires Mg(2+) as cofactor.

It localises to the cytoplasm. The enzyme catalyses 3-methyl-2-oxobutanoate + (6R)-5,10-methylene-5,6,7,8-tetrahydrofolate + H2O = 2-dehydropantoate + (6S)-5,6,7,8-tetrahydrofolate. It participates in cofactor biosynthesis; coenzyme A biosynthesis. Its function is as follows. Catalyzes the reversible reaction in which hydroxymethyl group from 5,10-methylenetetrahydrofolate is transferred onto alpha-ketoisovalerate to form ketopantoate. The protein is 3-methyl-2-oxobutanoate hydroxymethyltransferase of Pyrobaculum calidifontis (strain DSM 21063 / JCM 11548 / VA1).